We begin with the raw amino-acid sequence, 555 residues long: 3-oxocholest-4-en-26-oate--CoA ligase (555 aa).

ATP contacts are provided by residues Thr-172–Lys-180, Asp-418, Arg-433, and Lys-524. Positions Pro-525 to Gly-555 are disordered. The span at Asn-544–Gly-555 shows a compositional bias: low complexity.

This sequence belongs to the ATP-dependent AMP-binding enzyme family.

It catalyses the reaction (25S)-3-oxocholest-4-en-26-oate + ATP + CoA = (25S)-3-oxocholest-4-en-26-oyl-CoA + AMP + diphosphate. Its pathway is steroid metabolism; cholesterol metabolism. In terms of biological role, involved in the degradation of the side chains of C-24 branched-chain sterols. Catalyzes the ATP-dependent CoA thioesterification of the sterol 3-oxocholest-4-en-26-oate to yield 3-oxocholest-4-en-26-oyl-CoA. It can also use beta-sitosterol, campesterol and 3beta-hydroxy-5-cholesten-26-oate. The protein is 3-oxocholest-4-en-26-oate--CoA ligase of Rhodococcus rhodochrous.